We begin with the raw amino-acid sequence, 416 residues long: Serine hydroxymethyltransferase (416 aa).

(6S)-5,6,7,8-tetrahydrofolate-binding positions include Leu119 and 123–125 (GHL). At Lys228 the chain carries N6-(pyridoxal phosphate)lysine. Glu243 is a (6S)-5,6,7,8-tetrahydrofolate binding site.

It belongs to the SHMT family. As to quaternary structure, homodimer. Pyridoxal 5'-phosphate serves as cofactor.

The protein localises to the cytoplasm. The catalysed reaction is (6R)-5,10-methylene-5,6,7,8-tetrahydrofolate + glycine + H2O = (6S)-5,6,7,8-tetrahydrofolate + L-serine. It participates in one-carbon metabolism; tetrahydrofolate interconversion. It functions in the pathway amino-acid biosynthesis; glycine biosynthesis; glycine from L-serine: step 1/1. Its function is as follows. Catalyzes the reversible interconversion of serine and glycine with tetrahydrofolate (THF) serving as the one-carbon carrier. This reaction serves as the major source of one-carbon groups required for the biosynthesis of purines, thymidylate, methionine, and other important biomolecules. Also exhibits THF-independent aldolase activity toward beta-hydroxyamino acids, producing glycine and aldehydes, via a retro-aldol mechanism. The protein is Serine hydroxymethyltransferase of Desulforapulum autotrophicum (strain ATCC 43914 / DSM 3382 / VKM B-1955 / HRM2) (Desulfobacterium autotrophicum).